The sequence spans 491 residues: Glutamyl-tRNA(Gln) amidotransferase subunit A (491 aa).

Residues lysine 80 and serine 155 each act as charge relay system in the active site. Catalysis depends on serine 179, which acts as the Acyl-ester intermediate.

It belongs to the amidase family. GatA subfamily. As to quaternary structure, heterotrimer of A, B and C subunits.

It carries out the reaction L-glutamyl-tRNA(Gln) + L-glutamine + ATP + H2O = L-glutaminyl-tRNA(Gln) + L-glutamate + ADP + phosphate + H(+). Functionally, allows the formation of correctly charged Gln-tRNA(Gln) through the transamidation of misacylated Glu-tRNA(Gln) in organisms which lack glutaminyl-tRNA synthetase. The reaction takes place in the presence of glutamine and ATP through an activated gamma-phospho-Glu-tRNA(Gln). The polypeptide is Glutamyl-tRNA(Gln) amidotransferase subunit A (Salinispora arenicola (strain CNS-205)).